We begin with the raw amino-acid sequence, 130 residues long: Putative protein ZNF815 (130 aa).

In Homo sapiens (Human), this protein is Putative protein ZNF815 (ZNF815P).